Consider the following 207-residue polypeptide: Dephospho-CoA kinase (207 aa).

In terms of domain architecture, DPCK spans 4–203 (VIGLTGGIAS…EEGYIEKPNY (200 aa)). ATP is bound at residue 12-17 (ASGKST).

The protein belongs to the CoaE family.

It localises to the cytoplasm. It carries out the reaction 3'-dephospho-CoA + ATP = ADP + CoA + H(+). It functions in the pathway cofactor biosynthesis; coenzyme A biosynthesis; CoA from (R)-pantothenate: step 5/5. In terms of biological role, catalyzes the phosphorylation of the 3'-hydroxyl group of dephosphocoenzyme A to form coenzyme A. The sequence is that of Dephospho-CoA kinase from Staphylococcus aureus (strain bovine RF122 / ET3-1).